The chain runs to 513 residues: Lysine--tRNA ligase (513 aa).

A compositionally biased stretch (polar residues) spans 1–11 (MTEPTQPNAAQ). Positions 1–22 (MTEPTQPNAAQPNVVPEVDDNK) are disordered. Glu423 and Glu430 together coordinate Mg(2+).

The protein belongs to the class-II aminoacyl-tRNA synthetase family. In terms of assembly, homodimer. Mg(2+) is required as a cofactor.

The protein resides in the cytoplasm. The catalysed reaction is tRNA(Lys) + L-lysine + ATP = L-lysyl-tRNA(Lys) + AMP + diphosphate. In Paraburkholderia xenovorans (strain LB400), this protein is Lysine--tRNA ligase.